The following is a 1521-amino-acid chain: Protein dispatched homolog 1 (1521 aa).

Polar residues predominate over residues 1-10 (MAVISGSDSV). Positions 1 to 55 (MAVISGSDSVLLSNGSISTSTSNPSPLSPSDGDLPAQHLGPRETPRTKASPNGCL) are disordered. Over residues 11 to 35 (LLSNGSISTSTSNPSPLSPSDGDLP) the composition is skewed to low complexity. N-linked (GlcNAc...) asparagine glycans are attached at residues N14 and N58. The chain crosses the membrane as a helical span at residues 189–209 (VVVLGMCTLLIVVCALVGVLV). N390 carries N-linked (GlcNAc...) asparagine glycosylation. In terms of domain architecture, SSD spans 485–657 (GIEFGIKHSL…VTWLPAVIVL (173 aa)). Transmembrane regions (helical) follow at residues 499–519 (LLMD…IMCV), 524–544 (MFIT…SYFL), and 548–568 (VFNF…LVGI). An N-linked (GlcNAc...) asparagine glycan is attached at N581. The next 8 membrane-spanning stretches (helical) occupy residues 603–623 (AALS…ANYV), 637–657 (GTAI…VIVL), 717–737 (YLWL…VCVN), 986–1006 (MGLS…NIII), 1008–1028 (LYAI…LVLL), 1038–1058 (VTIS…GVAY), 1081–1101 (IAMA…STVL), and 1109–1129 (FMML…QCLC). Composition is skewed to polar residues over residues 1355-1364 (QENLGRTSTH) and 1418-1428 (TKSKVSGLPNQ). The disordered stretch occupies residues 1355–1440 (QENLGRTSTH…KEEKQVEPSL (86 aa)). An N-linked (GlcNAc...) asparagine glycan is attached at N1455.

It belongs to the dispatched family. Interacts with SHH; via the cholesterol anchor of the dually lipid-modified SHH (ShhNp).

The protein localises to the membrane. Its function is as follows. Functions in hedgehog (Hh) signaling. Regulates the release and extracellular accumulation of cholesterol-modified hedgehog proteins and is hence required for effective production of the Hh signal. Synergizes with SCUBE2 to cause an increase in SHH secretion. This is Protein dispatched homolog 1 (Disp1) from Mus musculus (Mouse).